The chain runs to 192 residues: Calcium-binding protein K (192 aa).

2 consecutive EF-hand domains span residues 60 to 95 and 96 to 131; these read WDEASMVRMFTLFDSDGNGVIDVKEFITALYLMAKA and PTLDKLGFFFDLFDSDKSGYLEREEVDKLVNIVVCC. Ca(2+) contacts are provided by aspartate 73, aspartate 75, asparagine 77, glutamate 84, aspartate 109, aspartate 111, serine 113, tyrosine 115, and glutamate 120.

Belongs to the recoverin family.

The chain is Calcium-binding protein K (cbpK) from Dictyostelium discoideum (Social amoeba).